A 306-amino-acid chain; its full sequence is tRNA pseudouridine synthase B (306 aa).

Asp39 serves as the catalytic Nucleophile.

Belongs to the pseudouridine synthase TruB family. Type 1 subfamily.

It catalyses the reaction uridine(55) in tRNA = pseudouridine(55) in tRNA. Functionally, responsible for synthesis of pseudouridine from uracil-55 in the psi GC loop of transfer RNAs. In Arthrobacter sp. (strain FB24), this protein is tRNA pseudouridine synthase B.